The sequence spans 732 residues: uncharacterized protein (732 aa).

A disordered region spans residues 145-207 (ETLRDSVINP…RRRPEMASPH (63 aa)). The span at 170–179 (KGHETLERGS) shows a compositional bias: basic and acidic residues. The region spanning 176-524 (ERGSKALGPE…KKIPFLGYLI (349 aa)) is the Reverse transcriptase domain.

It localises to the mitochondrion. This is an uncharacterized protein from Marchantia polymorpha (Common liverwort).